Consider the following 382-residue polypeptide: Dual-specificity RNA methyltransferase RlmN (382 aa).

The active-site Proton acceptor is E94. In terms of domain architecture, Radical SAM core spans 100-336 (EANRGTLCVS…NTITRKTRGD (237 aa)). An intrachain disulfide couples C107 to C342. [4Fe-4S] cluster is bound by residues C114, C118, and C121. S-adenosyl-L-methionine-binding positions include 168 to 169 (GE), S200, 222 to 224 (SLH), and N299. Residue C342 is the S-methylcysteine intermediate of the active site.

The protein belongs to the radical SAM superfamily. RlmN family. Requires [4Fe-4S] cluster as cofactor.

Its subcellular location is the cytoplasm. The enzyme catalyses adenosine(2503) in 23S rRNA + 2 reduced [2Fe-2S]-[ferredoxin] + 2 S-adenosyl-L-methionine = 2-methyladenosine(2503) in 23S rRNA + 5'-deoxyadenosine + L-methionine + 2 oxidized [2Fe-2S]-[ferredoxin] + S-adenosyl-L-homocysteine. The catalysed reaction is adenosine(37) in tRNA + 2 reduced [2Fe-2S]-[ferredoxin] + 2 S-adenosyl-L-methionine = 2-methyladenosine(37) in tRNA + 5'-deoxyadenosine + L-methionine + 2 oxidized [2Fe-2S]-[ferredoxin] + S-adenosyl-L-homocysteine. In terms of biological role, specifically methylates position 2 of adenine 2503 in 23S rRNA and position 2 of adenine 37 in tRNAs. m2A2503 modification seems to play a crucial role in the proofreading step occurring at the peptidyl transferase center and thus would serve to optimize ribosomal fidelity. The protein is Dual-specificity RNA methyltransferase RlmN of Legionella pneumophila (strain Lens).